We begin with the raw amino-acid sequence, 421 residues long: Gamma-glutamyl phosphate reductase (421 aa).

It belongs to the gamma-glutamyl phosphate reductase family.

The protein localises to the cytoplasm. The catalysed reaction is L-glutamate 5-semialdehyde + phosphate + NADP(+) = L-glutamyl 5-phosphate + NADPH + H(+). The protein operates within amino-acid biosynthesis; L-proline biosynthesis; L-glutamate 5-semialdehyde from L-glutamate: step 2/2. Functionally, catalyzes the NADPH-dependent reduction of L-glutamate 5-phosphate into L-glutamate 5-semialdehyde and phosphate. The product spontaneously undergoes cyclization to form 1-pyrroline-5-carboxylate. The polypeptide is Gamma-glutamyl phosphate reductase (Erythrobacter litoralis (strain HTCC2594)).